We begin with the raw amino-acid sequence, 381 residues long: MPFGNTHNKFKLNYKPEEEYPDLTKHNNHMAKALTPEIYKKLRDKETPSGFTLDDVIQTGVDNPGHPFIMTVGCVAGDEESYQVFKDLFDPIIQDRHGGYKPTDKHKTDLNHENLKGGDDLDPNYVLSSRVRTGRSIKGYTLPPHCSRGERRAVEKLSIEALNSLTGEFKGKYYPLKSMTEQEQQQLIDDHFLFDKPVSPLLLASGMARDWPDARGIWHNDNKTFLVWVNEEDHLRVISMQKGGNMKEVFRRFCVGLQKIEEIFKKAGHPFMWNEHLGYVLTCPSNLGTGLRGGVHVKLAHLSKHPKFEEILTRLRLQKRGTGGVDTAAVGSVFDISNADRLGSSEVEQVQLVVDGVKLMVEMEKKLEKGQSIDDMIPAQK.

Residues 11-98 form the Phosphagen kinase N-terminal domain; the sequence is KLNYKPEEEY…FDPIIQDRHG (88 aa). Positions 125-367 constitute a Phosphagen kinase C-terminal domain; the sequence is YVLSSRVRTG…KLMVEMEKKL (243 aa). Residue 128-132 participates in ATP binding; it reads SSRVR. Residue S164 is modified to Phosphoserine. The residue at position 166 (T166) is a Phosphothreonine. Residue S178 is modified to Phosphoserine. Position 180 is a phosphothreonine (T180). H191 is an ATP binding site. S199 bears the Phosphoserine mark. 2 residues coordinate ATP: R236 and R292. Residues T313 and T322 each carry the phosphothreonine modification. Residues 320 to 325 and D335 contribute to the ATP site; that span reads RGTGGV. The residue at position 372 (S372) is a Phosphoserine.

It belongs to the ATP:guanido phosphotransferase family. Dimer of identical or non-identical chains, which can be either B (brain type) or M (muscle type). With MM being the major form in skeletal muscle and myocardium, MB existing in myocardium, and BB existing in many tissues, especially brain.

It is found in the cytoplasm. It carries out the reaction creatine + ATP = N-phosphocreatine + ADP + H(+). Its function is as follows. Reversibly catalyzes the transfer of phosphate between ATP and various phosphogens (e.g. creatine phosphate). Creatine kinase isoenzymes play a central role in energy transduction in tissues with large, fluctuating energy demands, such as skeletal muscle, heart, brain and spermatozoa. In Canis lupus familiaris (Dog), this protein is Creatine kinase M-type (CKM).